The sequence spans 313 residues: 4-hydroxy-3-methylbut-2-enyl diphosphate reductase (313 aa).

Cys-14 is a binding site for [4Fe-4S] cluster. Positions 43 and 76 each coordinate (2E)-4-hydroxy-3-methylbut-2-enyl diphosphate. Residues His-43 and His-76 each contribute to the dimethylallyl diphosphate site. Isopentenyl diphosphate is bound by residues His-43 and His-76. Cys-98 contributes to the [4Fe-4S] cluster binding site. His-126 lines the (2E)-4-hydroxy-3-methylbut-2-enyl diphosphate pocket. His-126 contacts dimethylallyl diphosphate. His-126 contributes to the isopentenyl diphosphate binding site. Residue Glu-128 is the Proton donor of the active site. Residue Thr-166 participates in (2E)-4-hydroxy-3-methylbut-2-enyl diphosphate binding. [4Fe-4S] cluster is bound at residue Cys-196. Residues Ser-224, Ser-225, Asn-226, and Ser-269 each coordinate (2E)-4-hydroxy-3-methylbut-2-enyl diphosphate. 4 residues coordinate dimethylallyl diphosphate: Ser-224, Ser-225, Asn-226, and Ser-269. 4 residues coordinate isopentenyl diphosphate: Ser-224, Ser-225, Asn-226, and Ser-269.

This sequence belongs to the IspH family. The cofactor is [4Fe-4S] cluster.

It carries out the reaction isopentenyl diphosphate + 2 oxidized [2Fe-2S]-[ferredoxin] + H2O = (2E)-4-hydroxy-3-methylbut-2-enyl diphosphate + 2 reduced [2Fe-2S]-[ferredoxin] + 2 H(+). The catalysed reaction is dimethylallyl diphosphate + 2 oxidized [2Fe-2S]-[ferredoxin] + H2O = (2E)-4-hydroxy-3-methylbut-2-enyl diphosphate + 2 reduced [2Fe-2S]-[ferredoxin] + 2 H(+). It functions in the pathway isoprenoid biosynthesis; dimethylallyl diphosphate biosynthesis; dimethylallyl diphosphate from (2E)-4-hydroxy-3-methylbutenyl diphosphate: step 1/1. It participates in isoprenoid biosynthesis; isopentenyl diphosphate biosynthesis via DXP pathway; isopentenyl diphosphate from 1-deoxy-D-xylulose 5-phosphate: step 6/6. Its function is as follows. Catalyzes the conversion of 1-hydroxy-2-methyl-2-(E)-butenyl 4-diphosphate (HMBPP) into a mixture of isopentenyl diphosphate (IPP) and dimethylallyl diphosphate (DMAPP). Acts in the terminal step of the DOXP/MEP pathway for isoprenoid precursor biosynthesis. This chain is 4-hydroxy-3-methylbut-2-enyl diphosphate reductase, found in Tropheryma whipplei (strain TW08/27) (Whipple's bacillus).